Reading from the N-terminus, the 683-residue chain is MNEKTRKNISAAGLLIAIGIVYGDIGTSPLYVMKSIVAGNGGIANVNRDFIVGSISLVLWTVTLLTTLQTVFIALKATNHGEGGIFALYTLVRKRAKWLVLPALIGGAAILADGTLTPAVTVTTAIEGLKGIEFGHGNVPVSTQGTVIAITVVILLLLFSIQRMGTSIIGKAFGPIMFIWFTFLGVIGLMNMMGDLSILQALNPYYAIKLLFSPYNKAGIFILGSIFLATTGAEALYSDVGHVGKGNIIGSWPYVFVCLSLNYFGQGVWILNNPNYNAGNGDFNPFFEIIPQNIRLAAIVLATIAAVIASQALITGSFTLVAEASGLKFLPRMNIMYPSTKKGQIYIPSVNKMICAATIAIVLFFQTSAHMEAAYGLSITISMLMTTILLYEWLAMKGVHTIWNWLFLIFFGFLDVMFMLASLSKFMHGGYVSLVIAGFIGIIMYVWYYGNKIRDKRESRNAYVRLDEYVDMLTNLSHDEDYPTFATNLVYMAKVKYNKFIKREILYSILDKRPKRARAYWFVTVNVTNEPFTAEYAVNTYGTKNVINVQLFLGFKQQTSVNVYLRQIVHDLIADGTIESQPQEYTTTPGRDVGDFSFVIVNDVISPQTQLRSYEKFLVEARVWLQNLSSNPASWFGLDYADTVIERVPLILGNQRRQHITRIPPKKFEDIKKKLQAEGELKE.

12 consecutive transmembrane segments (helical) span residues Gly13–Met33, Ile55–Leu75, Trp98–Pro118, Val139–Phe159, Ile168–Gly188, Ala218–Ser238, Ser251–Leu271, Leu296–Gly316, Ile345–Phe365, Gly376–Met396, Thr401–Ala421, and Phe426–Val446.

The protein belongs to the HAK/KUP transporter (TC 2.A.72) family.

The protein localises to the cell membrane. It carries out the reaction K(+)(in) + H(+)(in) = K(+)(out) + H(+)(out). In terms of biological role, transport of potassium into the cell. Likely operates as a K(+):H(+) symporter. The polypeptide is Probable potassium transport system protein Kup 1 (Lactobacillus johnsonii (strain CNCM I-12250 / La1 / NCC 533)).